We begin with the raw amino-acid sequence, 246 residues long: Small ribosomal subunit protein uS2 (246 aa).

It belongs to the universal ribosomal protein uS2 family.

This chain is Small ribosomal subunit protein uS2, found in Stutzerimonas stutzeri (strain A1501) (Pseudomonas stutzeri).